Consider the following 723-residue polypeptide: Transmembrane channel-like protein 7 (723 aa).

2 disordered regions span residues 1–28 and 51–71; these read MSES…LSLD and RRRT…KPTD. The Extracellular portion of the chain corresponds to 1 to 168; it reads MSESSGSALQ…GIQSYFSFLR (168 aa). Asn-24 carries an N-linked (GlcNAc...) asparagine glycan. Asn-84 is a glycosylation site (N-linked (GlcNAc...) asparagine). Position 89 is a phosphoserine (Ser-89). A glycan (N-linked (GlcNAc...) asparagine) is linked at Asn-96. Residues 169-189 form a helical membrane-spanning segment; the sequence is FLVLLNLVIFLIIFMLVLLPV. Topologically, residues 190–219 are cytoplasmic; the sequence is LLTKYKITNSSFVLIPFKDMDKQCTVYPVS. The chain crosses the membrane as a helical span at residues 220 to 240; that stretch reads SSGLIYFYSYIIDLLSGTGFL. Residues 241 to 263 are Extracellular-facing; the sequence is EETSLFYGHYTIDGVKFQNFTYD. The N-linked (GlcNAc...) asparagine glycan is linked to Asn-259. The helical transmembrane segment at 264-284 threads the bilayer; sequence LPLAYLLSTIASLALSLLWIV. The Cytoplasmic portion of the chain corresponds to 285-362; the sequence is KRSVEGFKIN…EETIRIYSLR (78 aa). A helical transmembrane segment spans residues 363–383; it reads LFLNCIVLAVLGACFYAIYVA. The Extracellular portion of the chain corresponds to 384-404; sequence TVFSQEHMKKEIDKMVFGENL. The helical transmembrane segment at 405-425 threads the bilayer; the sequence is FILYLPSIVITLANFITPMIF. Topologically, residues 426–494 are cytoplasmic; that stretch reads AKIIRYEDYS…PCWETQVGQE (69 aa). The helical transmembrane segment at 495–515 threads the bilayer; that stretch reads MYKLMIFDFIIILAVTLFVDF. The Extracellular segment spans residues 516–555; sequence PRKLLVTYCSSCKLIQCWGQQEFAIPDNVLGIVYGQTICW. The helical transmembrane segment at 556–576 threads the bilayer; it reads IGAFFSPLLPAIATLKFIIIF. At 577–601 the chain is on the cytoplasmic side; it reads YVKEWSLLYTCRPSPRPFRASNSNF. Residues 602–622 form a helical membrane-spanning segment; sequence FFLLVLLIGLCLAIIPLTISI. The Extracellular segment spans residues 623-665; the sequence is SRIPSSKACGPFTNFNTTWEVIPKTVSTFPSSLQSFIHGVTSE. Asn-638 carries N-linked (GlcNAc...) asparagine glycosylation. The helical transmembrane segment at 666–686 threads the bilayer; sequence AFAVPFFMIICLIMFYFIALA. Residues 687-723 lie on the Cytoplasmic side of the membrane; that stretch reads GAHKRVVIQLREQLSLESRDKCYLIQKLTEAQRDMRN.

The protein belongs to the TMC family. In terms of assembly, interacts with PIEZO2; the interaction inhibits PIEZO2-conducted mechanically activated currents.

The protein resides in the membrane. In terms of biological role, acts as an inhibitory modulator of PIEZO2 mechanosensitive channel in dorsal root ganglion (DRG) neurons through physical interactions or interference with the interaction between PIEZO2 and the cytoskeleton. The chain is Transmembrane channel-like protein 7 from Homo sapiens (Human).